The following is a 397-amino-acid chain: Elongation factor Tu-2 (397 aa).

Residues 10 to 206 (KPHVNIGTIG…AVDEFVPEPV (197 aa)) form the tr-type G domain. The G1 stretch occupies residues 19–26 (GHIDHGKT). Residue 19-26 (GHIDHGKT) participates in GTP binding. Residue threonine 26 participates in Mg(2+) binding. Residues 62–66 (GITIS) are G2. Positions 83 to 86 (DCPG) are G3. Residues 83–87 (DCPGH) and 138–141 (NKTD) contribute to the GTP site. The G4 stretch occupies residues 138–141 (NKTD). Positions 176-178 (SAL) are G5.

It belongs to the TRAFAC class translation factor GTPase superfamily. Classic translation factor GTPase family. EF-Tu/EF-1A subfamily. Monomer.

Its subcellular location is the cytoplasm. The enzyme catalyses GTP + H2O = GDP + phosphate + H(+). In terms of biological role, GTP hydrolase that promotes the GTP-dependent binding of aminoacyl-tRNA to the A-site of ribosomes during protein biosynthesis. This is Elongation factor Tu-2 from Streptomyces ramocissimus.